A 374-amino-acid chain; its full sequence is N5-carboxyaminoimidazole ribonucleotide synthase (374 aa).

Residues Arg-108, Lys-148, 153–159 (GYDGKGQ), 183–186 (EKYL), Glu-191, His-214, and 266–267 (NE) each bind ATP. Positions 112–296 (KETLKSAGTK…QFDTHILAVT (185 aa)) constitute an ATP-grasp domain.

This sequence belongs to the PurK/PurT family. In terms of assembly, homodimer.

It catalyses the reaction 5-amino-1-(5-phospho-beta-D-ribosyl)imidazole + hydrogencarbonate + ATP = 5-carboxyamino-1-(5-phospho-D-ribosyl)imidazole + ADP + phosphate + 2 H(+). Its pathway is purine metabolism; IMP biosynthesis via de novo pathway; 5-amino-1-(5-phospho-D-ribosyl)imidazole-4-carboxylate from 5-amino-1-(5-phospho-D-ribosyl)imidazole (N5-CAIR route): step 1/2. Functionally, catalyzes the ATP-dependent conversion of 5-aminoimidazole ribonucleotide (AIR) and HCO(3)(-) to N5-carboxyaminoimidazole ribonucleotide (N5-CAIR). In Staphylococcus aureus (strain Mu50 / ATCC 700699), this protein is N5-carboxyaminoimidazole ribonucleotide synthase.